Reading from the N-terminus, the 306-residue chain is Ribonuclease Z (306 aa).

Zn(2+) contacts are provided by H63, H65, D67, H68, H141, D211, and H269. D67 functions as the Proton acceptor in the catalytic mechanism.

This sequence belongs to the RNase Z family. As to quaternary structure, homodimer. Requires Zn(2+) as cofactor.

The enzyme catalyses Endonucleolytic cleavage of RNA, removing extra 3' nucleotides from tRNA precursor, generating 3' termini of tRNAs. A 3'-hydroxy group is left at the tRNA terminus and a 5'-phosphoryl group is left at the trailer molecule.. In terms of biological role, zinc phosphodiesterase, which displays some tRNA 3'-processing endonuclease activity. Probably involved in tRNA maturation, by removing a 3'-trailer from precursor tRNA. This Macrococcus caseolyticus (strain JCSC5402) (Macrococcoides caseolyticum) protein is Ribonuclease Z.